We begin with the raw amino-acid sequence, 395 residues long: Zinc-regulated GTPase metalloprotein activator 1F (395 aa).

The segment at 1 to 22 (MLPAVGSVDEEEDPAEEDCPEL) is disordered. Residues 8 to 20 (VDEEEDPAEEDCP) are compositionally biased toward acidic residues. The psi-PxLVp motif motif lies at 17-24 (EDCPELVP). 49–56 (GYLGAGKT) serves as a coordination point for GTP. Positions 107, 109, and 110 each coordinate Zn(2+). Positions 107–110 (CLCC) match the CXCC motif motif. GTP is bound by residues 110-114 (CSVKD) and 203-206 (NKTD). The region spanning 274–377 (IVTITFDVPG…ILKQLFIATV (104 aa)) is the CobW C-terminal domain.

It belongs to the SIMIBI class G3E GTPase family. ZNG1 subfamily.

The protein resides in the nucleus. The enzyme catalyses GTP + H2O = GDP + phosphate + H(+). In terms of biological role, zinc chaperone that directly transfers zinc cofactor to target metalloproteins, thereby activating them. Catalyzes zinc insertion into the active site of methionine aminopeptidase METAP1, which function to cleave the initiator methionine from polypeptides during or after protein translation. Mechanistically, the N-terminal psi-PxLVp motif binds to the C6H2-type zinc finger of inactive form of METAP1. After formation of the docked complex, zinc is transferred from the CXCC motif in the GTPase domain of ZNG1F to the zinc binding site in the peptidase domain of METAP1 in a process requiring GTP hydrolysis. GTP/GDP exchange is required for release of active METAP1. This chain is Zinc-regulated GTPase metalloprotein activator 1F, found in Homo sapiens (Human).